Here is a 470-residue protein sequence, read N- to C-terminus: Cupincin (470 aa).

The first 34 residues, 1 to 34 (MAKKKTSSSMARSQLAALLISLCFLSLASNAVGW), serve as a signal peptide directing secretion. A compositionally biased stretch (basic and acidic residues) spans 36-52 (RRGEREEEDERRRHGGE). 2 disordered regions span residues 36 to 57 (RRGE…GRPY) and 240 to 261 (KSCS…PSSL). Cupin type-1 domains lie at 57–215 (YHFG…EELE) and 259–445 (SSLT…AREA). N-linked (GlcNAc...) asparagine glycosylation is present at Asn-297. The interval 330 to 368 (PHVSGGGSSERREREREHGRRREEEQGEEEHGERGEKAR) is disordered. Positions 338–367 (SERREREREHGRRREEEQGEEEHGERGEKA) are enriched in basic and acidic residues. Residues His-347, Glu-352, and His-360 each contribute to the Zn(2+) site.

This sequence belongs to the 7S seed storage protein family. In terms of assembly, homotrimer. It depends on Zn(2+) as a cofactor.

It localises to the secreted. Seed storage protein. Globulin-like protein that acts as a zinc metalloprotease. Cleaves specifically between Leu-15 and Tyr-16 of insulin B chain, and Gln-1 and Leu-2 of neurotensin (NT) peptide in vitro. May play a role as an initiating endopeptidase in germinating seeds. In Oryza sativa subsp. indica (Rice), this protein is Cupincin.